The sequence spans 209 residues: tRNA (guanine-N(7)-)-methyltransferase (209 aa).

Residues D35, E60, N87, and D113 each coordinate S-adenosyl-L-methionine. D113 is an active-site residue. Residues K117 and D149 each contribute to the substrate site.

It belongs to the class I-like SAM-binding methyltransferase superfamily. TrmB family.

The catalysed reaction is guanosine(46) in tRNA + S-adenosyl-L-methionine = N(7)-methylguanosine(46) in tRNA + S-adenosyl-L-homocysteine. It functions in the pathway tRNA modification; N(7)-methylguanine-tRNA biosynthesis. Functionally, catalyzes the formation of N(7)-methylguanine at position 46 (m7G46) in tRNA. The sequence is that of tRNA (guanine-N(7)-)-methyltransferase from Prochlorococcus marinus (strain AS9601).